The sequence spans 421 residues: Histidine--tRNA ligase (421 aa).

This sequence belongs to the class-II aminoacyl-tRNA synthetase family. In terms of assembly, homodimer.

Its subcellular location is the cytoplasm. It catalyses the reaction tRNA(His) + L-histidine + ATP = L-histidyl-tRNA(His) + AMP + diphosphate + H(+). The chain is Histidine--tRNA ligase from Francisella tularensis subsp. holarctica (strain FTNF002-00 / FTA).